The sequence spans 444 residues: Proline--tRNA ligase (444 aa).

The protein belongs to the class-II aminoacyl-tRNA synthetase family. ProS type 2 subfamily. As to quaternary structure, homodimer.

The protein resides in the cytoplasm. The enzyme catalyses tRNA(Pro) + L-proline + ATP = L-prolyl-tRNA(Pro) + AMP + diphosphate. Functionally, catalyzes the attachment of proline to tRNA(Pro) in a two-step reaction: proline is first activated by ATP to form Pro-AMP and then transferred to the acceptor end of tRNA(Pro). This chain is Proline--tRNA ligase, found in Bradyrhizobium sp. (strain BTAi1 / ATCC BAA-1182).